A 212-amino-acid chain; its full sequence is Small ribosomal subunit protein uS5 (212 aa).

Residues Leu48–Val111 enclose the S5 DRBM domain.

It belongs to the universal ribosomal protein uS5 family. Part of the 30S ribosomal subunit. Contacts protein S4.

With S4 and S12 plays an important role in translational accuracy. This Halobacterium salinarum (strain ATCC 700922 / JCM 11081 / NRC-1) (Halobacterium halobium) protein is Small ribosomal subunit protein uS5.